A 489-amino-acid polypeptide reads, in one-letter code: Tripartite motif-containing protein 10 (489 aa).

An RING-type zinc finger spans residues 16 to 61 (CPICQGTLREPVTIDCGHNFCRGCLTRYCEIPGPESEESLSCPLCK). Residues 94 to 135 (EVEDACPEHGEKIYFFCEEDEAQLCVVCRETGQHGAHTVRFL) form a B box-type zinc finger. The Zn(2+) site is built by Cys99, His102, Cys121, and His127. The stretch at 144–180 (EQIQKCLVCLRKEREEIQETQSRENKRIQVLLTQVAT) forms a coiled coil. Residues 292–486 (QEMKTFLEKL…FSLSCQEGAV (195 aa)) enclose the B30.2/SPRY domain.

The protein belongs to the TRIM/RBCC family. In terms of assembly, interacts with IFNAR1; this interaction prevents association of IFNAR1 with TYK2. In terms of tissue distribution, expressed in embryonic liver.

Its subcellular location is the cytoplasm. Functionally, E3 ligase that plays an essential role in the differentiation and survival of terminal erythroid cells. May directly bind to PTEN and promote its ubiquitination, resulting in its proteasomal degradation and activation of hypertrophic signaling. In addition, plays a role in immune response regulation by repressing the phosphorylation of STAT1 and STAT2 in the interferon/JAK/STAT signaling pathway independent of its E3 ligase activity. Mechanistically, interacts with the intracellular domain of IFNAR1 and thereby inhibits the association between TYK2 and IFNAR1. The polypeptide is Tripartite motif-containing protein 10 (Trim10) (Mus musculus (Mouse)).